The chain runs to 286 residues: tRNA pseudouridine synthase A (286 aa).

Asp-60 (nucleophile) is an active-site residue. Tyr-132 lines the substrate pocket.

This sequence belongs to the tRNA pseudouridine synthase TruA family. As to quaternary structure, homodimer.

It catalyses the reaction uridine(38/39/40) in tRNA = pseudouridine(38/39/40) in tRNA. Its function is as follows. Formation of pseudouridine at positions 38, 39 and 40 in the anticodon stem and loop of transfer RNAs. The chain is tRNA pseudouridine synthase A from Mycobacterium leprae (strain TN).